We begin with the raw amino-acid sequence, 318 residues long: Porphobilinogen deaminase (318 aa).

Cys241 carries the post-translational modification S-(dipyrrolylmethanemethyl)cysteine.

This sequence belongs to the HMBS family. Monomer. The cofactor is dipyrromethane.

The enzyme catalyses 4 porphobilinogen + H2O = hydroxymethylbilane + 4 NH4(+). It participates in porphyrin-containing compound metabolism; protoporphyrin-IX biosynthesis; coproporphyrinogen-III from 5-aminolevulinate: step 2/4. In terms of biological role, tetrapolymerization of the monopyrrole PBG into the hydroxymethylbilane pre-uroporphyrinogen in several discrete steps. This is Porphobilinogen deaminase from Citrifermentans bemidjiense (strain ATCC BAA-1014 / DSM 16622 / JCM 12645 / Bem) (Geobacter bemidjiensis).